Reading from the N-terminus, the 198-residue chain is MLENLNLSLFSLINATPDSAPWMISLAIFIAKDLITVVPLLAVVLWLWGLTAQRQLVIKIAIALAVSLFVSWTMGHLFPHDRPFVENIGYNFLHHAADDSFPSDHGTVIFTFALAFLCWHRLWSGSLLMVLAVVIAWSRVYLGVHWPLDMLGGLLAGMIGCLSAQIIWQAMGHKLYQRLQSWYRVCFALPIRKGWVRD.

The Cytoplasmic segment spans residues 1–27 (MLENLNLSLFSLINATPDSAPWMISLA). Residues 28 to 48 (IFIAKDLITVVPLLAVVLWLW) form a helical membrane-spanning segment. The Periplasmic portion of the chain corresponds to 49–57 (GLTAQRQLV). The helical transmembrane segment at 58–78 (IKIAIALAVSLFVSWTMGHLF) threads the bilayer. Residues 79–120 (PHDRPFVENIGYNFLHHAADDSFPSDHGTVIFTFALAFLCWH) are Cytoplasmic-facing. The helical transmembrane segment at 121 to 143 (RLWSGSLLMVLAVVIAWSRVYLG) threads the bilayer. Residues 144–149 (VHWPLD) are Periplasmic-facing. The chain crosses the membrane as a helical span at residues 150–172 (MLGGLLAGMIGCLSAQIIWQAMG). The Cytoplasmic segment spans residues 173–198 (HKLYQRLQSWYRVCFALPIRKGWVRD).

Belongs to the BcrC/YbjG family.

The protein resides in the cell inner membrane. The catalysed reaction is di-trans,octa-cis-undecaprenyl diphosphate + H2O = di-trans,octa-cis-undecaprenyl phosphate + phosphate + H(+). Functionally, overexpression leads to increased undecaprenyl diphosphatase activity and to increased resistance to bacitracin. May have a preferred substrate other than undecaprenyl diphosphate in vivo. The chain is Putative undecaprenyl-diphosphatase YbjG (ybjG) from Escherichia coli (strain K12).